A 557-amino-acid polypeptide reads, in one-letter code: Formate--tetrahydrofolate ligase (557 aa).

65–72 contacts ATP; sequence TPAGEGKT.

This sequence belongs to the formate--tetrahydrofolate ligase family.

It catalyses the reaction (6S)-5,6,7,8-tetrahydrofolate + formate + ATP = (6R)-10-formyltetrahydrofolate + ADP + phosphate. The protein operates within one-carbon metabolism; tetrahydrofolate interconversion. The protein is Formate--tetrahydrofolate ligase of Zymomonas mobilis subsp. mobilis (strain ATCC 31821 / ZM4 / CP4).